The sequence spans 284 residues: Prestalk D11 protein (284 aa).

Residues 1–25 (MLNKLILLLILSSCLVLSVKSEVNV) form the signal peptide. The A-1 repeat unit spans residues 25–64 (VDCSLVRCAQPICKPHYRLNMTDSCCGRCEPCTDVACTLQ). A B-1 repeat occupies 65-82 (VKYCQDGEVPTGCCPCTL). One copy of the A-2 repeat lies at 88-126 (DCSLVKCARPVCKPYYRLNMTDSCCGRCEPCTGVACTLQ). The B-2 repeat unit spans residues 127-144 (IKYCKDGEVPTGCCPCTP). The C-1 repeat unit spans residues 145 to 159 (QPTKKPDCSKVPCPK). One copy of the B-3 repeat lies at 161–178 (LKYCQEGELPTGCCPCTP). A C-2 repeat occupies 179 to 193 (QPTKKPDCSRVPCPK). One copy of the B-4 repeat lies at 195 to 212 (LKYCKEGELPTGCCPCTP). Residues 213–228 (QPTKKPDCSDVMCTMD) form a C-3 repeat. Residues 229–246 (IRYCKNGELPTGCCPCTP) form a B-5 repeat. The stretch at 247–262 (QETKVPDCSKAMCTMD) is one C-4 repeat. The B-6 repeat unit spans residues 263-278 (IKYCKPGEKPFGCCPC).

The sequence is that of Prestalk D11 protein (ampA) from Dictyostelium discoideum (Social amoeba).